We begin with the raw amino-acid sequence, 156 residues long: Small ribosomal subunit protein uS7 (156 aa).

It belongs to the universal ribosomal protein uS7 family. As to quaternary structure, part of the 30S ribosomal subunit. Contacts proteins S9 and S11.

In terms of biological role, one of the primary rRNA binding proteins, it binds directly to 16S rRNA where it nucleates assembly of the head domain of the 30S subunit. Is located at the subunit interface close to the decoding center, probably blocks exit of the E-site tRNA. This is Small ribosomal subunit protein uS7 from Aromatoleum aromaticum (strain DSM 19018 / LMG 30748 / EbN1) (Azoarcus sp. (strain EbN1)).